The following is a 645-amino-acid chain: Threonine--tRNA ligase (645 aa).

Residues 1–62 enclose the TGS domain; that stretch reads MSIHITFPDG…VEDGSLEIVT (62 aa). The catalytic stretch occupies residues 242–541; sequence DHRKLGKELD…LTEVYKGAFP (300 aa). Zn(2+) is bound by residues C336, H387, and H518.

It belongs to the class-II aminoacyl-tRNA synthetase family. Homodimer. Zn(2+) is required as a cofactor.

The protein localises to the cytoplasm. It catalyses the reaction tRNA(Thr) + L-threonine + ATP = L-threonyl-tRNA(Thr) + AMP + diphosphate + H(+). In terms of biological role, catalyzes the attachment of threonine to tRNA(Thr) in a two-step reaction: L-threonine is first activated by ATP to form Thr-AMP and then transferred to the acceptor end of tRNA(Thr). Also edits incorrectly charged L-seryl-tRNA(Thr). This chain is Threonine--tRNA ligase, found in Enterococcus faecalis (strain ATCC 700802 / V583).